A 165-amino-acid chain; its full sequence is Type 3 secretion system regulator YopR (165 aa).

Belongs to the YopR family.

The protein localises to the secreted. In terms of biological role, may be involved in the regulation of the assembly of the type III secretion system (T3SS), also called injectisome, which is used to inject bacterial effector proteins into eukaryotic host cells. May control the secretion and/or polymerization of YscF/SctF, the principal component of the needle filament, thereby impacting the assembly of the T3SS. Involved in pathogenesis. This Yersinia pseudotuberculosis serotype I (strain IP32953) protein is Type 3 secretion system regulator YopR.